The sequence spans 495 residues: Putative aldehyde dehydrogenase AldA (495 aa).

Glycine 212 to glycine 218 is a binding site for NAD(+). Residues glutamate 256 and cysteine 290 contribute to the active site.

It belongs to the aldehyde dehydrogenase family.

The catalysed reaction is an aldehyde + NAD(+) + H2O = a carboxylate + NADH + 2 H(+). The sequence is that of Putative aldehyde dehydrogenase AldA (aldA) from Staphylococcus aureus (strain MRSA252).